A 1434-amino-acid chain; its full sequence is Nitric oxide synthase 1 (1434 aa).

An interaction with NOSIP region spans residues Met-1–Leu-205. Residues Ser-17–Gly-99 form the PDZ domain. 2 disordered regions span residues Thr-112 to Thr-192 and Asn-276 to Cys-302. Positions Tyr-163 to Asp-245 are interaction with DYNLL1/PIN. Polar residues predominate over residues Pro-285–Pro-299. A (6R)-L-erythro-5,6,7,8-tetrahydrobiopterin-binding site is contributed by Ser-339. Cys-420 contacts heme b. Residues Gln-483, Trp-592, Tyr-593, and Glu-597 each contribute to the L-arginine site. (6R)-L-erythro-5,6,7,8-tetrahydrobiopterin is bound by residues Val-682, Trp-683, and Phe-696. Tyr-711 is a heme b binding site. A calmodulin-binding region spans residues Lys-730–Met-750. The region spanning Ala-760 to Phe-940 is the Flavodoxin-like domain. Residues Thr-766, Glu-767, Thr-768, Lys-770, Ser-771, Ser-812, Thr-813, and Gly-817 each coordinate FMN. Phosphoserine is present on residues Ser-852, Ser-862, and Ser-863. Positions 891, 896, 898, 924, and 928 each coordinate FMN. In terms of domain architecture, FAD-binding FR-type spans Lys-995–Pro-1242. Arg-1015 serves as a coordination point for NADP(+). FAD-binding residues include His-1037, Arg-1178, Tyr-1179, Tyr-1180, Ser-1181, Thr-1196, and Ala-1198. Ser-1201 contacts NADP(+). Residues Tyr-1202, Val-1215, Cys-1216, and Ser-1217 each coordinate FAD. The NADP(+) site is built by Thr-1256, Arg-1289, Ser-1318, Arg-1319, Lys-1325, Tyr-1327, Gln-1329, Asp-1362, Thr-1403, and Arg-1405.

This sequence belongs to the NOS family. As to quaternary structure, homodimer. Interacts with DLG4; the interaction possibly being prevented by the association between NOS1 and CAPON. Forms a ternary complex with CAPON and RASD1. Forms a ternary complex with CAPON and SYN1. Interacts with ZDHHC23. Interacts with NOSIP; which may impair its synaptic location. Interacts with HTR4. Interacts with SLC6A4. Interacts with VAC14. Interacts (via N-terminal domain) with DLG4 (via N-terminal tandem pair of PDZ domains). Interacts with SLC6A4. Forms a complex with ASL, ASS1 and SLC7A1; the complex regulates cell-autonomous L-arginine synthesis and citrulline recycling while channeling extracellular L-arginine to nitric oxide synthesis pathway. Interacts with DMD; localizes NOS1 to sarcolemma in muscle cells. Interacts with DYNLL1; inhibits the nitric oxide synthase activity. The cofactor is heme b. FAD serves as cofactor. Requires FMN as cofactor. It depends on (6R)-L-erythro-5,6,7,8-tetrahydrobiopterin as a cofactor. Ubiquitinated; mediated by STUB1/CHIP in the presence of Hsp70 and Hsp40 (in vitro). Isoform 1 is ubiquitously expressed: detected in skeletal muscle and brain, also in testis, lung and kidney, and at low levels in heart, adrenal gland and retina. Not detected in the platelets. Isoform 3 is expressed only in testis. Isoform 4 is detected in testis, skeletal muscle, lung, and kidney, at low levels in the brain, but not in the heart and adrenal gland.

Its subcellular location is the cell membrane. It localises to the sarcolemma. It is found in the cell projection. The protein resides in the dendritic spine. The catalysed reaction is 2 L-arginine + 3 NADPH + 4 O2 + H(+) = 2 L-citrulline + 2 nitric oxide + 3 NADP(+) + 4 H2O. Stimulated by calcium/calmodulin. Inhibited by DYNLL1 that prevents the dimerization of the protein. Inhibited by NOSIP. Its function is as follows. Produces nitric oxide (NO) which is a messenger molecule with diverse functions throughout the body. In the brain and peripheral nervous system, NO displays many properties of a neurotransmitter. Probably has nitrosylase activity and mediates cysteine S-nitrosylation of cytoplasmic target proteins such SRR. The polypeptide is Nitric oxide synthase 1 (Homo sapiens (Human)).